A 455-amino-acid chain; its full sequence is Probable glycine dehydrogenase (decarboxylating) subunit 1 (455 aa).

It belongs to the GcvP family. N-terminal subunit subfamily. As to quaternary structure, the glycine cleavage system is composed of four proteins: P, T, L and H. In this organism, the P 'protein' is a heterodimer of two subunits.

The enzyme catalyses N(6)-[(R)-lipoyl]-L-lysyl-[glycine-cleavage complex H protein] + glycine + H(+) = N(6)-[(R)-S(8)-aminomethyldihydrolipoyl]-L-lysyl-[glycine-cleavage complex H protein] + CO2. Its function is as follows. The glycine cleavage system catalyzes the degradation of glycine. The P protein binds the alpha-amino group of glycine through its pyridoxal phosphate cofactor; CO(2) is released and the remaining methylamine moiety is then transferred to the lipoamide cofactor of the H protein. The sequence is that of Probable glycine dehydrogenase (decarboxylating) subunit 1 from Francisella tularensis subsp. holarctica (strain FTNF002-00 / FTA).